We begin with the raw amino-acid sequence, 198 residues long: Peptidyl-tRNA hydrolase (198 aa).

Tyr-14 serves as a coordination point for tRNA. Catalysis depends on His-19, which acts as the Proton acceptor. TRNA is bound by residues Tyr-64, Asn-66, and Asn-113.

Belongs to the PTH family. As to quaternary structure, monomer.

It localises to the cytoplasm. The catalysed reaction is an N-acyl-L-alpha-aminoacyl-tRNA + H2O = an N-acyl-L-amino acid + a tRNA + H(+). Functionally, hydrolyzes ribosome-free peptidyl-tRNAs (with 1 or more amino acids incorporated), which drop off the ribosome during protein synthesis, or as a result of ribosome stalling. Its function is as follows. Catalyzes the release of premature peptidyl moieties from peptidyl-tRNA molecules trapped in stalled 50S ribosomal subunits, and thus maintains levels of free tRNAs and 50S ribosomes. This Acidobacterium capsulatum (strain ATCC 51196 / DSM 11244 / BCRC 80197 / JCM 7670 / NBRC 15755 / NCIMB 13165 / 161) protein is Peptidyl-tRNA hydrolase.